The chain runs to 66 residues: Small vasohibin-binding protein (66 aa).

The span at 1 to 23 shows a compositional bias: basic and acidic residues; sequence MDPPARKEKSKVKEPAFRVEKAK. A disordered region spans residues 1–30; it reads MDPPARKEKSKVKEPAFRVEKAKQKSAQQE. The stretch at 5–52 forms a coiled coil; sequence ARKEKSKVKEPAFRVEKAKQKSAQQELKQRQRAEIYALNRVMTELEQQ.

The protein belongs to the SVBP family. As to quaternary structure, interacts with VASH1 and VASH2. Highly expressed in bone marrow, spleen and testis.

The protein localises to the cytoplasm. It is found in the secreted. Its subcellular location is the cytoskeleton. In terms of biological role, enhances the tyrosine carboxypeptidase activity of VASH1 and VASH2, thereby promoting the removal of the C-terminal tyrosine residue of alpha-tubulin. Also required to enhance the solubility and secretion of VASH1 and VASH2. Plays a role in axon and excitatory synapse formation. In Mus musculus (Mouse), this protein is Small vasohibin-binding protein.